The chain runs to 129 residues: UPF0344 protein USA300HOU_0928 (129 aa).

A run of 4 helical transmembrane segments spans residues 1 to 21 (MLHL…ATYL), 36 to 56 (LHMI…WILI), 67 to 87 (MLLT…EVSI), and 99 to 119 (MFWI…ILPL).

Belongs to the UPF0344 family.

Its subcellular location is the cell membrane. The protein is UPF0344 protein USA300HOU_0928 of Staphylococcus aureus (strain USA300 / TCH1516).